A 198-amino-acid polypeptide reads, in one-letter code: Recombination protein RecR (198 aa).

The segment at 58 to 73 (CLNCGNVGTSDICDIC) adopts a C4-type zinc-finger fold. The 95-residue stretch at 81–175 (GELCVVEDVA…RLTSLAQGVP (95 aa)) folds into the Toprim domain.

It belongs to the RecR family.

Its function is as follows. May play a role in DNA repair. It seems to be involved in an RecBC-independent recombinational process of DNA repair. It may act with RecF and RecO. The polypeptide is Recombination protein RecR (Ruegeria pomeroyi (strain ATCC 700808 / DSM 15171 / DSS-3) (Silicibacter pomeroyi)).